The chain runs to 222 residues: NAD(P)H-hydrate epimerase (222 aa).

Residues 9–209 (MQQIDSYTIE…DIGLRLPEDF (201 aa)) enclose the YjeF N-terminal domain. Position 57-61 (57-61 (NNGAD)) interacts with (6S)-NADPHX. K(+)-binding residues include N58 and D119. (6S)-NADPHX-binding positions include 123–129 (GVGLNNT) and D152. A K(+)-binding site is contributed by T155.

Belongs to the NnrE/AIBP family. K(+) is required as a cofactor.

The enzyme catalyses (6R)-NADHX = (6S)-NADHX. It catalyses the reaction (6R)-NADPHX = (6S)-NADPHX. In terms of biological role, catalyzes the epimerization of the S- and R-forms of NAD(P)HX, a damaged form of NAD(P)H that is a result of enzymatic or heat-dependent hydration. This is a prerequisite for the S-specific NAD(P)H-hydrate dehydratase to allow the repair of both epimers of NAD(P)HX. The polypeptide is NAD(P)H-hydrate epimerase (Leuconostoc citreum (strain KM20)).